Here is a 367-residue protein sequence, read N- to C-terminus: Pectate lyase 1 (367 aa).

An N-terminal signal peptide occupies residues 1-21 (MASPCLIAVLVFLCAIVSCYS). Residues Cys-28 and Cys-45 are joined by a disulfide bond. The interval 38-305 (NRMKLADCAV…YKKEVTKRIG (268 aa)) is beta-helix. Residues 92-104 (IFSQNMNIKLKMP) form an igE-binding. Binds to IgE in 5 out of 7 patients tested region. Cysteines 128 and 147 form a disulfide. Residue Asn-148 is glycosylated (N-linked (GlcNAc...) asparagine). Asp-170 is a binding site for Ca(2+). Residue Asn-178 is glycosylated (N-linked (GlcNAc...) asparagine). 2 residues coordinate Ca(2+): Asp-194 and Asp-198. The segment at 239-250 (AFNQFGPNAGQR) is igE-binding. Binds to IgE in 6 out of 7 patients tested. Arg-250 is an active-site residue. Residues 251–258 (MPRARYGL) are igE-binding. Binds to IgE in 5 out of 7 patients tested. Cys-306 and Cys-312 are disulfide-bonded. The igE-binding. Binds to IgE in 3 out of 7 patients tested stretch occupies residues 317 to 327 (WRSTRDAFING).

It belongs to the polysaccharide lyase 1 family. Amb a subfamily. Requires Ca(2+) as cofactor. N-glycosylated; consists of complex-type N-glycans containing the Lewis a antigen (Galbeta1-3(Fucalpha1-4)GlcNAcbeta1-). As to expression, expressed in pollen (at protein level).

The catalysed reaction is Eliminative cleavage of (1-&gt;4)-alpha-D-galacturonan to give oligosaccharides with 4-deoxy-alpha-D-galact-4-enuronosyl groups at their non-reducing ends.. The protein operates within glycan metabolism; pectin degradation; 2-dehydro-3-deoxy-D-gluconate from pectin: step 2/5. Its function is as follows. Has low pectate lyase activity. This chain is Pectate lyase 1, found in Juniperus ashei (Ozark white cedar).